The chain runs to 485 residues: Ribulose bisphosphate carboxylase large chain (485 aa).

The propeptide occupies 1–2; it reads MS. Pro3 is subject to N-acetylproline. Lys14 bears the N6,N6,N6-trimethyllysine mark. Residues Asn123 and Thr173 each contribute to the substrate site. Lys175 serves as the catalytic Proton acceptor. Lys177 serves as a coordination point for substrate. Residues Lys201, Asp203, and Glu204 each coordinate Mg(2+). Lys201 bears the N6-carboxylysine mark. Catalysis depends on His294, which acts as the Proton acceptor. Residues Arg295, His327, and Ser379 each coordinate substrate.

Belongs to the RuBisCO large chain family. Type I subfamily. As to quaternary structure, heterohexadecamer of 8 large chains and 8 small chains; disulfide-linked. The disulfide link is formed within the large subunit homodimers. Mg(2+) is required as a cofactor. In terms of processing, the disulfide bond which can form in the large chain dimeric partners within the hexadecamer appears to be associated with oxidative stress and protein turnover.

The protein localises to the plastid. Its subcellular location is the chloroplast. It catalyses the reaction 2 (2R)-3-phosphoglycerate + 2 H(+) = D-ribulose 1,5-bisphosphate + CO2 + H2O. The enzyme catalyses D-ribulose 1,5-bisphosphate + O2 = 2-phosphoglycolate + (2R)-3-phosphoglycerate + 2 H(+). Functionally, ruBisCO catalyzes two reactions: the carboxylation of D-ribulose 1,5-bisphosphate, the primary event in carbon dioxide fixation, as well as the oxidative fragmentation of the pentose substrate in the photorespiration process. Both reactions occur simultaneously and in competition at the same active site. The chain is Ribulose bisphosphate carboxylase large chain from Bartlettina sordida (Purple torch).